The sequence spans 448 residues: ATP-dependent protease ATPase subunit HslU (448 aa).

Residues I18, 60–65, D261, E326, and R398 each bind ATP; that span reads GVGKTE.

This sequence belongs to the ClpX chaperone family. HslU subfamily. As to quaternary structure, a double ring-shaped homohexamer of HslV is capped on each side by a ring-shaped HslU homohexamer. The assembly of the HslU/HslV complex is dependent on binding of ATP.

The protein resides in the cytoplasm. ATPase subunit of a proteasome-like degradation complex; this subunit has chaperone activity. The binding of ATP and its subsequent hydrolysis by HslU are essential for unfolding of protein substrates subsequently hydrolyzed by HslV. HslU recognizes the N-terminal part of its protein substrates and unfolds these before they are guided to HslV for hydrolysis. The sequence is that of ATP-dependent protease ATPase subunit HslU from Paraburkholderia xenovorans (strain LB400).